The sequence spans 195 residues: Segregation and condensation protein B (195 aa).

A disordered region spans residues 169-195 (LEDVAASQENSREAGGRGSIPGHPGEE).

Belongs to the ScpB family. Homodimer. Homodimerization may be required to stabilize the binding of ScpA to the Smc head domains. Component of a cohesin-like complex composed of ScpA, ScpB and the Smc homodimer, in which ScpA and ScpB bind to the head domain of Smc. The presence of the three proteins is required for the association of the complex with DNA.

Its subcellular location is the cytoplasm. Its function is as follows. Participates in chromosomal partition during cell division. May act via the formation of a condensin-like complex containing Smc and ScpA that pull DNA away from mid-cell into both cell halves. This is Segregation and condensation protein B from Moorella thermoacetica (strain ATCC 39073 / JCM 9320).